We begin with the raw amino-acid sequence, 1168 residues long: Probable serine/threonine protein kinase IRE (1168 aa).

Disordered stretches follow at residues 1–165 (MSTT…GVES) and 377–444 (EKQN…KIQP). A compositionally biased stretch (low complexity) spans 16–25 (PTTISTPTST). Composition is skewed to basic and acidic residues over residues 39 to 54 (RHSDKEGEDEQAKTDE) and 107 to 130 (QDDKDVAKEKPRVGVVDARADARA). Composition is skewed to polar residues over residues 146-163 (QWSQSKSQRVPANSNPGV) and 401-414 (TARSTDSTSSNFRM). The C2H2-type; atypical zinc finger occupies 488 to 507 (CRICEVEIPVVHVEEHSRIC). 3 disordered regions span residues 546-566 (PRAVADSARLSNSSRQEDLDE), 602-622 (GTKDSSAGSLTPPSPATPRNS), and 717-744 (SSNAMPDEESSADEDTVRSLRASPLNPR). Residues 754–1043 (FEIIKPISRG…AGEVKQHHFF (290 aa)) enclose the Protein kinase domain. ATP-binding positions include 760-768 (ISRGAFGRV) and Lys-783. The active-site Proton acceptor is Asp-877. An AGC-kinase C-terminal domain is found at 1044–1144 (KDINWDTLAR…KNLSQLASIN (101 aa)).

Belongs to the protein kinase superfamily. AGC Ser/Thr protein kinase family. In terms of tissue distribution, highly expressed in roots, elongating root hair cells and pollen grains.

The enzyme catalyses L-seryl-[protein] + ATP = O-phospho-L-seryl-[protein] + ADP + H(+). It carries out the reaction L-threonyl-[protein] + ATP = O-phospho-L-threonyl-[protein] + ADP + H(+). Functionally, modulates root tip growth. May play a common role in the tip growth of plant cells. The chain is Probable serine/threonine protein kinase IRE from Arabidopsis thaliana (Mouse-ear cress).